The primary structure comprises 331 residues: Adenosine deaminase (331 aa).

2 residues coordinate Zn(2+): histidine 12 and histidine 14. Residues histidine 14 and aspartate 16 each contribute to the substrate site. Histidine 197 provides a ligand contact to Zn(2+). Glutamate 200 acts as the Proton donor in catalysis. Aspartate 278 provides a ligand contact to Zn(2+).

It belongs to the metallo-dependent hydrolases superfamily. Adenosine and AMP deaminases family. Adenosine deaminase subfamily. The cofactor is Zn(2+).

The enzyme catalyses adenosine + H2O + H(+) = inosine + NH4(+). It catalyses the reaction 2'-deoxyadenosine + H2O + H(+) = 2'-deoxyinosine + NH4(+). Catalyzes the hydrolytic deamination of adenosine and 2-deoxyadenosine. This is Adenosine deaminase from Shewanella halifaxensis (strain HAW-EB4).